Here is a 126-residue protein sequence, read N- to C-terminus: Type II methyltransferase M.HgiGI (126 aa).

Residues 1 to 126 (MKTIDLFAGC…ARLSKIHQQA (126 aa)) form the SAM-dependent MTase C5-type domain. Cys75 is a catalytic residue.

It belongs to the class I-like SAM-binding methyltransferase superfamily. C5-methyltransferase family.

The catalysed reaction is a 2'-deoxycytidine in DNA + S-adenosyl-L-methionine = a 5-methyl-2'-deoxycytidine in DNA + S-adenosyl-L-homocysteine + H(+). Its function is as follows. A methylase, recognizes the double-stranded sequence 5'-GRCGYC-3', methylates C-? on both strands, and protects the DNA from cleavage by the HgiEI endonuclease. The chain is Type II methyltransferase M.HgiGI from Herpetosiphon aurantiacus (Herpetosiphon giganteus).